The following is a 537-amino-acid chain: O-phosphoserine--tRNA(Cys) ligase (537 aa).

Substrate contacts are provided by residues 186-188 (HMT), 231-233 (SAS), 273-274 (YY), and N317.

This sequence belongs to the class-II aminoacyl-tRNA synthetase family. O-phosphoseryl-tRNA(Cys) synthetase subfamily. Homotetramer. Interacts with SepCysS.

It carries out the reaction tRNA(Cys) + O-phospho-L-serine + ATP = O-phospho-L-seryl-tRNA(Cys) + AMP + diphosphate. Its function is as follows. Catalyzes the attachment of O-phosphoserine (Sep) to tRNA(Cys). The protein is O-phosphoserine--tRNA(Cys) ligase of Methanococcus vannielii (strain ATCC 35089 / DSM 1224 / JCM 13029 / OCM 148 / SB).